The sequence spans 490 residues: GTPase Der (490 aa).

2 consecutive EngA-type G domains span residues 3–166 (PVVA…MDDV) and 203–376 (IKLA…DSST). Residues 9 to 16 (GRPNVGKS), 56 to 60 (DTGGI), 118 to 121 (NKTD), 209 to 216 (GRPNVGKS), 256 to 260 (DTAGV), and 321 to 324 (NKWD) contribute to the GTP site. Residues 377-461 (RRVSTAMLTR…PIRIQFKEGE (85 aa)) form the KH-like domain.

Belongs to the TRAFAC class TrmE-Era-EngA-EngB-Septin-like GTPase superfamily. EngA (Der) GTPase family. Associates with the 50S ribosomal subunit.

Functionally, GTPase that plays an essential role in the late steps of ribosome biogenesis. The protein is GTPase Der of Citrobacter koseri (strain ATCC BAA-895 / CDC 4225-83 / SGSC4696).